Reading from the N-terminus, the 124-residue chain is Small ribosomal subunit protein uS12 (124 aa).

Asp-89 carries the post-translational modification 3-methylthioaspartic acid.

This sequence belongs to the universal ribosomal protein uS12 family. In terms of assembly, part of the 30S ribosomal subunit. Contacts proteins S8 and S17. May interact with IF1 in the 30S initiation complex.

With S4 and S5 plays an important role in translational accuracy. Functionally, interacts with and stabilizes bases of the 16S rRNA that are involved in tRNA selection in the A site and with the mRNA backbone. Located at the interface of the 30S and 50S subunits, it traverses the body of the 30S subunit contacting proteins on the other side and probably holding the rRNA structure together. The combined cluster of proteins S8, S12 and S17 appears to hold together the shoulder and platform of the 30S subunit. The protein is Small ribosomal subunit protein uS12 of Shewanella denitrificans (strain OS217 / ATCC BAA-1090 / DSM 15013).